A 197-amino-acid chain; its full sequence is Dephospho-CoA kinase (197 aa).

Positions 2–197 (RIGLTGGIAS…YDALAKTAHE (196 aa)) constitute a DPCK domain. 10-15 (ASGKSL) is a binding site for ATP.

The protein belongs to the CoaE family.

It localises to the cytoplasm. It catalyses the reaction 3'-dephospho-CoA + ATP = ADP + CoA + H(+). The protein operates within cofactor biosynthesis; coenzyme A biosynthesis; CoA from (R)-pantothenate: step 5/5. Its function is as follows. Catalyzes the phosphorylation of the 3'-hydroxyl group of dephosphocoenzyme A to form coenzyme A. The polypeptide is Dephospho-CoA kinase (Shouchella clausii (strain KSM-K16) (Alkalihalobacillus clausii)).